The following is a 188-amino-acid chain: Adenine phosphoribosyltransferase (188 aa).

This sequence belongs to the purine/pyrimidine phosphoribosyltransferase family. In terms of assembly, homodimer.

The protein resides in the cytoplasm. The catalysed reaction is AMP + diphosphate = 5-phospho-alpha-D-ribose 1-diphosphate + adenine. It participates in purine metabolism; AMP biosynthesis via salvage pathway; AMP from adenine: step 1/1. Its function is as follows. Catalyzes a salvage reaction resulting in the formation of AMP, that is energically less costly than de novo synthesis. The sequence is that of Adenine phosphoribosyltransferase from Paraburkholderia phytofirmans (strain DSM 17436 / LMG 22146 / PsJN) (Burkholderia phytofirmans).